We begin with the raw amino-acid sequence, 842 residues long: Elongation factor 2 (842 aa).

Positions 17–346 constitute a tr-type G domain; that stretch reads ANVRNMSVIA…MIVLHLPSPV (330 aa). GTP contacts are provided by residues 26-33, 158-161, and 213-215; these read AHVDHGKS, NKVD, and SGL. Position 699 is a diphthamide (histidine 699).

It belongs to the TRAFAC class translation factor GTPase superfamily. Classic translation factor GTPase family. EF-G/EF-2 subfamily.

Its subcellular location is the cytoplasm. The enzyme catalyses GTP + H2O = GDP + phosphate + H(+). It functions in the pathway protein biosynthesis; polypeptide chain elongation. Its function is as follows. Catalyzes the GTP-dependent ribosomal translocation step during translation elongation. During this step, the ribosome changes from the pre-translocational (PRE) to the post-translocational (POST) state as the newly formed A-site-bound peptidyl-tRNA and P-site-bound deacylated tRNA move to the P and E sites, respectively. Catalyzes the coordinated movement of the two tRNA molecules, the mRNA and conformational changes in the ribosome. This Meyerozyma guilliermondii (strain ATCC 6260 / CBS 566 / DSM 6381 / JCM 1539 / NBRC 10279 / NRRL Y-324) (Yeast) protein is Elongation factor 2 (EFT2).